The chain runs to 856 residues: Beta-galactosidase 3 (856 aa).

The signal sequence occupies residues 1–31 (MREMGTGDSASRLILWFCLGFLILGVGFVQC). The Proton donor role is filled by Glu-189. Glu-258 serves as the catalytic Nucleophile. Asn-468 carries an N-linked (GlcNAc...) asparagine glycan. The SUEL-type lectin domain maps to 760-846 (TFHRPKVHLK…KRLTVEAVCA (87 aa)).

This sequence belongs to the glycosyl hydrolase 35 family. In terms of tissue distribution, ubiquitous.

It is found in the secreted. The protein localises to the extracellular space. The protein resides in the apoplast. It carries out the reaction Hydrolysis of terminal non-reducing beta-D-galactose residues in beta-D-galactosides.. The sequence is that of Beta-galactosidase 3 (BGAL3) from Arabidopsis thaliana (Mouse-ear cress).